The chain runs to 415 residues: Putative competence-damage inducible protein (415 aa).

The protein belongs to the CinA family.

This is Putative competence-damage inducible protein from Limosilactobacillus reuteri (strain DSM 20016) (Lactobacillus reuteri).